A 378-amino-acid chain; its full sequence is MSHVDDGFRSLTLKRFPQTDDVNPLLAWEAADEYLLQQLDETEIRGPVLILNDTFGALSCALAEHSPYSIGDSYLSELGTRENLRHNGIAESSVTFLDSTADYPQAPGVVLIKVPKTLALLEQQLRALRKVVTAQTRIIAGAKARDIHTSTLELFEKVLGPTTTTLAWKKARLINCTFSHPQLADAPQTLNWKLEDTGWTIHNHANVFSRTGLDIGARFFMQHLPENLDGEIVDLGCGNGVIGLSLLAKNPQANVVFVDESPMAVDSSRLNVETNLPEAFERCEFMINNALSGVEPFRFNAVFCNPPFHQKHALTDNIAWEMFHHARRCLKINGELYIVANRHLDYFHKLKKIFGNCATIATNNKFVILKAVKQGRRR.

Belongs to the methyltransferase superfamily. RlmG family.

It is found in the cytoplasm. It catalyses the reaction guanosine(1835) in 23S rRNA + S-adenosyl-L-methionine = N(2)-methylguanosine(1835) in 23S rRNA + S-adenosyl-L-homocysteine + H(+). Specifically methylates the guanine in position 1835 (m2G1835) of 23S rRNA. The protein is Ribosomal RNA large subunit methyltransferase G of Salmonella heidelberg (strain SL476).